Reading from the N-terminus, the 521-residue chain is FAD-dependent monooxygenase mdpD (521 aa).

The interval 1-48 (MTHFPVNIASDKQEFDPERWAKTPTTESSVNGENGTAPTSGLPSRHPS) is disordered. The span at 11-21 (DKQEFDPERWA) shows a compositional bias: basic and acidic residues. Positions 23-48 (TPTTESSVNGENGTAPTSGLPSRHPS) are enriched in polar residues. Residues valine 94 and arginine 160 each contribute to the FAD site. Residues arginine 244 and tyrosine 271 contribute to the active site. 2 residues coordinate FAD: aspartate 369 and glycine 382.

The protein belongs to the paxM FAD-dependent monooxygenase family. It depends on FAD as a cofactor.

It functions in the pathway secondary metabolite biosynthesis. In terms of biological role, FAD-dependent monooxygenase; part of the gene cluster that mediates the biosynthesis of monodictyphenone, a prenyl xanthone derivative. The pathway begins with the synthesis of atrochrysone thioester by the polyketide synthase (PKS) mdpG. The atrochrysone carboxyl ACP thioesterase mdpF then breaks the thioester bond and releases the atrochrysone carboxylic acid from mdpG. The atrochrysone carboxylic acid is then converted to atrochrysone which is further transformed into emodin anthrone. The next step is performed by the anthrone oxygenase mdpH that catalyzes the oxidation of emodinanthrone to emodin. Emodin is further modified to yield monodictyphenone via several steps involving mdpB, mdpC mdpJ, mdpK and mdpL. These enzymes with xptA, xptB and xptC are also proposed to be involved in the synthesis of shamixanthone from emodin. Especially, direct reduction of emodin by the short chain dehydrogenase mdpC followed by dehydration catalyzed by the scytalone dehydratase-like protein mdpB gives loss of oxygen and formation of chrysophanol intermediate in two simple steps. This is FAD-dependent monooxygenase mdpD from Emericella nidulans (strain FGSC A4 / ATCC 38163 / CBS 112.46 / NRRL 194 / M139) (Aspergillus nidulans).